Consider the following 290-residue polypeptide: Programmed cell death 1 ligand 1 (290 aa).

A signal peptide spans 1-18 (MRIFAVFIFMTYWHLLNA). The Ig-like V-type domain occupies 19–127 (FTVTVPKDLY…YGGADYKRIT (109 aa)). Residues 19–238 (FTVTVPKDLY…LPLAHPPNER (220 aa)) are Extracellular-facing. Residue Asn-35 is glycosylated (N-linked (GlcNAc...) asparagine). Disulfide bonds link Cys-40–Cys-114 and Cys-155–Cys-209. Positions 133 to 225 (PYNKINQRIL…PEENHTAELV (93 aa)) constitute an Ig-like C2-type domain. Residues Asn-192, Asn-200, and Asn-219 are each glycosylated (N-linked (GlcNAc...) asparagine). The chain crosses the membrane as a helical span at residues 239 to 259 (THLVILGAILLCLGVALTFIF). Residues 260-290 (RLRKGRMMDVKKCGIQDTNSKKQSDTHLEET) are Cytoplasmic-facing.

It belongs to the immunoglobulin superfamily. BTN/MOG family. In terms of assembly, interacts with PDCD1. Interacts (via transmembrane domain) with CMTM4 and CMTM6. Interacts with (phosphorylated) STAT3; promoting nuclear translocation. Interacts with CD80. As to quaternary structure, may form homomultimers. Post-translationally, ubiquitinated; STUB1 likely mediates polyubiquitination of PD-L1/CD274 triggering its degradation. Ubiquitinated by MARCHF8; leading to degradation. Deubiquitinated by USP22; leading to stabilization. In terms of tissue distribution, highly expressed in the heart, skeletal muscle, placenta and lung. Weakly expressed in the thymus, spleen, kidney and liver. Expressed on activated T- and B-cells, dendritic cells, keratinocytes and monocytes. As to expression, widely expressed, highest in lung, liver and pituitary and in various peripheral blood cells, including neutrophils and some subtypes of lymphoid and myeloid cells.

The protein resides in the cell membrane. The protein localises to the early endosome membrane. Its subcellular location is the recycling endosome membrane. It is found in the nucleus. It localises to the endomembrane system. The protein resides in the secreted. Plays a critical role in induction and maintenance of immune tolerance to self. As a ligand for the inhibitory receptor PDCD1/PD-1, modulates the activation threshold of T-cells and limits T-cell effector response. Through a yet unknown activating receptor, may costimulate T-cell subsets that predominantly produce interleukin-10 (IL10). Can also act as a transcription coactivator: in response to hypoxia, translocates into the nucleus via its interaction with phosphorylated STAT3 and promotes transcription of GSDMC, leading to pyroptosis. In terms of biological role, the PDCD1-mediated inhibitory pathway is exploited by tumors to attenuate anti-tumor immunity and escape destruction by the immune system, thereby facilitating tumor survival. The interaction with PDCD1/PD-1 inhibits cytotoxic T lymphocytes (CTLs) effector function. The blockage of the PDCD1-mediated pathway results in the reversal of the exhausted T-cell phenotype and the normalization of the anti-tumor response, providing a rationale for cancer immunotherapy. The polypeptide is Programmed cell death 1 ligand 1 (Homo sapiens (Human)).